The primary structure comprises 195 residues: Imidazoleglycerol-phosphate dehydratase (195 aa).

The protein belongs to the imidazoleglycerol-phosphate dehydratase family.

The protein localises to the cytoplasm. The enzyme catalyses D-erythro-1-(imidazol-4-yl)glycerol 3-phosphate = 3-(imidazol-4-yl)-2-oxopropyl phosphate + H2O. The protein operates within amino-acid biosynthesis; L-histidine biosynthesis; L-histidine from 5-phospho-alpha-D-ribose 1-diphosphate: step 6/9. The sequence is that of Imidazoleglycerol-phosphate dehydratase from Aminomonas aminovorus.